The sequence spans 515 residues: Maturase K (515 aa).

Belongs to the intron maturase 2 family. MatK subfamily.

Its subcellular location is the plastid. The protein resides in the chloroplast. Its function is as follows. Usually encoded in the trnK tRNA gene intron. Probably assists in splicing its own and other chloroplast group II introns. The protein is Maturase K of Ceratophyllum demersum (Rigid hornwort).